The sequence spans 173 residues: Cell division protein SepF (173 aa).

A disordered region spans residues 17-85 (SDDEYISDET…NELRTITTVH (69 aa)). Residues 35-52 (SAGGSSAAVSESGSTSVA) are compositionally biased toward low complexity.

Belongs to the SepF family. As to quaternary structure, homodimer. Interacts with FtsZ.

It localises to the cytoplasm. Cell division protein that is part of the divisome complex and is recruited early to the Z-ring. Probably stimulates Z-ring formation, perhaps through the cross-linking of FtsZ protofilaments. Its function overlaps with FtsA. The chain is Cell division protein SepF from Kocuria rhizophila (strain ATCC 9341 / DSM 348 / NBRC 103217 / DC2201).